We begin with the raw amino-acid sequence, 134 residues long: Holo-[acyl-carrier-protein] synthase (134 aa).

Mg(2+) contacts are provided by aspartate 8 and glutamate 57.

The protein belongs to the P-Pant transferase superfamily. AcpS family. It depends on Mg(2+) as a cofactor.

The protein localises to the cytoplasm. The catalysed reaction is apo-[ACP] + CoA = holo-[ACP] + adenosine 3',5'-bisphosphate + H(+). In terms of biological role, transfers the 4'-phosphopantetheine moiety from coenzyme A to a Ser of acyl-carrier-protein. This chain is Holo-[acyl-carrier-protein] synthase, found in Brucella abortus (strain S19).